The sequence spans 400 residues: Vitamin K-dependent protein Z (400 aa).

The first 23 residues, 1-23 (MAGCVPLLQGLVLVLALHRVEPS), serve as a signal peptide directing secretion. Positions 24–40 (VFLPASKANDVLVRWKR) are excised as a propeptide. The Gla domain maps to 41–86 (AGSYLLEELFEGNLEKECYEEICVYEEAREVFENEVVTDEFWRRYK). 13 positions are modified to 4-carboxyglutamate: Glu-47, Glu-48, Glu-51, Glu-55, Glu-57, Glu-60, Glu-61, Glu-66, Glu-67, Glu-70, Glu-73, Glu-75, and Glu-80. A disulfide bridge connects residues Cys-58 and Cys-63. 2 consecutive EGF-like domains span residues 87 to 123 (GGSP…SNCE) and 125 to 166 (AKNE…KQCV). Cystine bridges form between Cys-91/Cys-102, Cys-96/Cys-111, Cys-113/Cys-122, Cys-129/Cys-141, Cys-137/Cys-150, Cys-152/Cys-165, and Cys-203/Cys-219. O-linked (Glc...) serine glycosylation occurs at Ser-93. N-linked (GlcNAc...) asparagine glycosylation is present at Asn-99. Asp-104 is modified ((3R)-3-hydroxyaspartate). Residues 175–400 (VLTSEKRAPD…YSLWFKQIMN (226 aa)) form the Peptidase S1 domain. N-linked (GlcNAc...) asparagine glycans are attached at residues Asn-225, Asn-233, Asn-306, and Asn-332. Cys-327 and Cys-341 form a disulfide bridge.

This sequence belongs to the peptidase S1 family. As to quaternary structure, interacts with SERPINA10. Post-translationally, the iron and 2-oxoglutarate dependent 3-hydroxylation of aspartate and asparagine is (R) stereospecific within EGF domains. As to expression, plasma.

Its subcellular location is the secreted. In terms of biological role, appears to assist hemostasis by binding thrombin and promoting its association with phospholipid vesicles. Inhibits activity of the coagulation protease factor Xa in the presence of SERPINA10, calcium and phospholipids. This chain is Vitamin K-dependent protein Z (PROZ), found in Homo sapiens (Human).